The primary structure comprises 287 residues: Nucleotide-binding protein Ppro_0977 (287 aa).

Residue 8–15 coordinates ATP; the sequence is GMSGSGKS. A GTP-binding site is contributed by 59-62; that stretch reads DIRG.

It belongs to the RapZ-like family.

Functionally, displays ATPase and GTPase activities. This is Nucleotide-binding protein Ppro_0977 from Pelobacter propionicus (strain DSM 2379 / NBRC 103807 / OttBd1).